Consider the following 114-residue polypeptide: NADH dehydrogenase [ubiquinone] 1 subunit C2, isoform 2 (114 aa).

Residues 56-75 (GLHRQLLYITAFFFAGYYLV) form a helical membrane-spanning segment.

This sequence belongs to the complex I NDUFC2 subunit family. As to quaternary structure, complex I is composed of 45 different subunits.

It localises to the mitochondrion inner membrane. In terms of biological role, accessory subunit of the mitochondrial membrane respiratory chain NADH dehydrogenase (Complex I), that is believed not to be involved in catalysis. Complex I functions in the transfer of electrons from NADH to the respiratory chain. The immediate electron acceptor for the enzyme is believed to be ubiquinone. In Homo sapiens (Human), this protein is NADH dehydrogenase [ubiquinone] 1 subunit C2, isoform 2 (NDUFC2-KCTD14).